A 353-amino-acid polypeptide reads, in one-letter code: Photosystem II protein D1 (353 aa).

Thr2 carries the N-acetylthreonine modification. Phosphothreonine is present on Thr2. The next 3 membrane-spanning stretches (helical) occupy residues 29 to 46, 118 to 133, and 142 to 156; these read YIGWFGVLMIPTLLTATS, HFLLGVACYMGREWEL, and WIAVAYSAPVAAAAA. Residue His118 participates in chlorophyll a binding. Position 126 (Tyr126) interacts with pheophytin a. Residues Asp170 and Glu189 each contribute to the [CaMn4O5] cluster site. Residues 197-218 form a helical membrane-spanning segment; that stretch reads FHMLGVAGVFGGSLFSAMHGSL. His198 is a chlorophyll a binding site. Residues His215 and 264–265 each bind a quinone; that span reads SF. Residue His215 coordinates Fe cation. Fe cation is bound at residue His272. A helical membrane pass occupies residues 274–288; the sequence is FLAAWPVVGIWFTAL. Positions 332, 333, 342, and 344 each coordinate [CaMn4O5] cluster. The propeptide occupies 345 to 353; that stretch reads AVEAPSTNG.

It belongs to the reaction center PufL/M/PsbA/D family. PSII is composed of 1 copy each of membrane proteins PsbA, PsbB, PsbC, PsbD, PsbE, PsbF, PsbH, PsbI, PsbJ, PsbK, PsbL, PsbM, PsbT, PsbX, PsbY, PsbZ, Psb30/Ycf12, at least 3 peripheral proteins of the oxygen-evolving complex and a large number of cofactors. It forms dimeric complexes. The D1/D2 heterodimer binds P680, chlorophylls that are the primary electron donor of PSII, and subsequent electron acceptors. It shares a non-heme iron and each subunit binds pheophytin, quinone, additional chlorophylls, carotenoids and lipids. D1 provides most of the ligands for the Mn4-Ca-O5 cluster of the oxygen-evolving complex (OEC). There is also a Cl(-1) ion associated with D1 and D2, which is required for oxygen evolution. The PSII complex binds additional chlorophylls, carotenoids and specific lipids. is required as a cofactor. In terms of processing, tyr-161 forms a radical intermediate that is referred to as redox-active TyrZ, YZ or Y-Z. Post-translationally, C-terminally processed by CTPA; processing is essential to allow assembly of the oxygen-evolving complex and thus photosynthetic growth.

It localises to the plastid. The protein localises to the chloroplast thylakoid membrane. The catalysed reaction is 2 a plastoquinone + 4 hnu + 2 H2O = 2 a plastoquinol + O2. Its function is as follows. Photosystem II (PSII) is a light-driven water:plastoquinone oxidoreductase that uses light energy to abstract electrons from H(2)O, generating O(2) and a proton gradient subsequently used for ATP formation. It consists of a core antenna complex that captures photons, and an electron transfer chain that converts photonic excitation into a charge separation. The D1/D2 (PsbA/PsbD) reaction center heterodimer binds P680, the primary electron donor of PSII as well as several subsequent electron acceptors. In Nandina domestica (Heavenly bamboo), this protein is Photosystem II protein D1.